Consider the following 466-residue polypeptide: GTP cyclohydrolase 1 (466 aa).

Positions 342, 345, and 416 each coordinate Zn(2+).

The protein belongs to the GTP cyclohydrolase I family. As to quaternary structure, homodimer.

It carries out the reaction GTP + H2O = 7,8-dihydroneopterin 3'-triphosphate + formate + H(+). It participates in cofactor biosynthesis; 7,8-dihydroneopterin triphosphate biosynthesis; 7,8-dihydroneopterin triphosphate from GTP: step 1/1. In terms of biological role, GTP cyclohydrolase 1 is the first enzyme in the biosynthetic pathway leading to folic acid. The polypeptide is GTP cyclohydrolase 1 (GCH1) (Arabidopsis thaliana (Mouse-ear cress)).